Reading from the N-terminus, the 1314-residue chain is E3 ubiquitin-protein ligase RNF123 (1314 aa).

At Ala-2 the chain carries N-acetylalanine. The B30.2/SPRY domain occupies 74-254; the sequence is VDSEDEESQG…VAFNFGSRPL (181 aa). The tract at residues 460 to 481 is disordered; sequence HRSSREGKDSAEDRAEAAEERP. Over residues 462-481 the composition is skewed to basic and acidic residues; sequence SSREGKDSAEDRAEAAEERP. Ser-675 carries the post-translational modification Phosphoserine. An Asymmetric dimethylarginine modification is found at Arg-683. The tract at residues 968–974 is interaction with NFKB1; the sequence is WILVRLW. 8 residues coordinate Zn(2+): Cys-1254, Cys-1257, Cys-1269, His-1271, Cys-1274, Cys-1277, Cys-1288, and Cys-1291. An RING-type zinc finger spans residues 1254 to 1292; sequence CPICYAHPISAVFQPCGHKSCKACIDQHLMNNKDCFFCK.

Component of the KPC complex composed of RNF123/KPC1 and UBAC1/KPC2. Interacts with UBAC1 and CDKN1B via its N-terminal domain. Interacts with RIGI (via N-terminus) and IFIH1 (via N-terminus). In terms of processing, ubiquitinated, leading to its degradation. Deubiquitinated by USP19, thereby stimulating CDKN1B ubiquitin-dependent degradation.

The protein localises to the cytoplasm. It carries out the reaction S-ubiquitinyl-[E2 ubiquitin-conjugating enzyme]-L-cysteine + [acceptor protein]-L-lysine = [E2 ubiquitin-conjugating enzyme]-L-cysteine + N(6)-ubiquitinyl-[acceptor protein]-L-lysine.. The protein operates within protein modification; protein ubiquitination. Its function is as follows. Catalytic subunit of the KPC complex that acts as E3 ubiquitin-protein ligase. Promotes the ubiquitination and proteasome-mediated degradation of CDKN1B which is the cyclin-dependent kinase inhibitor at the G0-G1 transition of the cell cycle. Also acts as a key regulator of the NF-kappa-B signaling by promoting maturation of the NFKB1 component of NF-kappa-B. Acts by catalyzing ubiquitination of the NFKB1 p105 precursor, leading to limited proteasomal degradation of NFKB1 p105 and generation of the active NFKB1 p50 subunit. Functions also as an inhibitor of innate antiviral signaling mediated by RIGI and IFIH1 independently of its E3 ligase activity. Interacts with the N-terminal CARD domains of RIGI and IFIH1 and competes with the downstream adapter MAVS. The protein is E3 ubiquitin-protein ligase RNF123 of Oryctolagus cuniculus (Rabbit).